A 249-amino-acid polypeptide reads, in one-letter code: Pleckstrin homology domain-containing family F member 2 (249 aa).

The 97-residue stretch at 35-131 (VLIGEGVLTK…WMNHINKCVS (97 aa)) folds into the PH domain. An FYVE-type zinc finger spans residues 152 to 212 (DSEATVCMRC…ICDSCYDLLS (61 aa)). 8 residues coordinate Zn(2+): C158, C161, C175, C178, C183, C186, C204, and C207. Polar residues predominate over residues 219–232 (CQSTRSDSYSQSPK). The segment at 219–249 (CQSTRSDSYSQSPKSSLNDASDDDDDEDSSD) is disordered. Over residues 238–249 (ASDDDDDEDSSD) the composition is skewed to acidic residues.

The protein localises to the early endosome membrane. It localises to the endoplasmic reticulum. Functionally, may play a role in early endosome fusion upstream of RAB5, hence regulating receptor trafficking and fluid-phase transport. Enhances cellular sensitivity to TNF-induced apoptosis. This Gallus gallus (Chicken) protein is Pleckstrin homology domain-containing family F member 2 (PLEKHF2).